We begin with the raw amino-acid sequence, 409 residues long: NADH-ubiquinone oxidoreductase chain 4 (409 aa).

Helical transmembrane passes span 10 to 30, 44 to 64, 76 to 96, 98 to 118, 120 to 140, 160 to 180, 194 to 214, 221 to 241, 245 to 265, 271 to 291, 305 to 325, 353 to 373, and 389 to 409; these read LWLFKPIYFLLFTVMFSFLIF, SYSFILLIVMSLFILGIIVIS, ILVFICIIFFIPSNMMMLYMF, ELSMFPILVMILGYGSQIEKI, SSYYLMFYAAFCSFPFLFVYF, FFILSLSFMMKFPIYFLHLWL, LLAGLLLKLGTAGFLRILGSL, VWILIAFLGMILGSFCCVFQS, ALAAYSSVTHMSFLLLSLVFI, ISSVMLMLAHGYTSTLMFYLI, FMSSFFSSSMIMGILFSVVFL, MFVMIFIYFVVSFYYSLFLIT, and VGFSAPLVLMMYNVFWLSVFY.

Belongs to the complex I subunit 4 family.

The protein resides in the mitochondrion membrane. The catalysed reaction is a ubiquinone + NADH + 5 H(+)(in) = a ubiquinol + NAD(+) + 4 H(+)(out). Core subunit of the mitochondrial membrane respiratory chain NADH dehydrogenase (Complex I) that is believed to belong to the minimal assembly required for catalysis. Complex I functions in the transfer of electrons from NADH to the respiratory chain. The immediate electron acceptor for the enzyme is believed to be ubiquinone. In Caenorhabditis elegans, this protein is NADH-ubiquinone oxidoreductase chain 4.